A 186-amino-acid chain; its full sequence is UPF0397 protein LCABL_04350 (186 aa).

5 helical membrane-spanning segments follow: residues 12–32, 45–65, 77–97, 112–132, and 150–170; these read VVAI…AVIP, GFLG…IGFL, TPWW…GLFW, IVSF…LIAP, and GIVS…ILLV.

It belongs to the UPF0397 family.

It localises to the cell membrane. The sequence is that of UPF0397 protein LCABL_04350 from Lacticaseibacillus casei (strain BL23) (Lactobacillus casei).